Reading from the N-terminus, the 241-residue chain is MNIVKNELLYEGKAKKIYKTDDENTLYVVYKDSATAFNGEKKAEISGKGRLNNEISSLIFKHLHAKGINNHFIERISETEQLIKKVTIVPLEVVVRNVVAGSMSKRLGIPEGTELEQPIIEFYYKDDALGDPLITEDHIWLLKAATPEQVETIKSITTIVNEELQSIFDDCHVRLIDFKLEFGLDAEGQVLLADEISPDTCRLWDKETNEKLDKDLFRRNLGSLTDAYEEIFNRLGGIHHV.

The protein belongs to the SAICAR synthetase family.

It catalyses the reaction 5-amino-1-(5-phospho-D-ribosyl)imidazole-4-carboxylate + L-aspartate + ATP = (2S)-2-[5-amino-1-(5-phospho-beta-D-ribosyl)imidazole-4-carboxamido]succinate + ADP + phosphate + 2 H(+). It functions in the pathway purine metabolism; IMP biosynthesis via de novo pathway; 5-amino-1-(5-phospho-D-ribosyl)imidazole-4-carboxamide from 5-amino-1-(5-phospho-D-ribosyl)imidazole-4-carboxylate: step 1/2. The sequence is that of Phosphoribosylaminoimidazole-succinocarboxamide synthase (purC) from Bacillus subtilis (strain 168).